A 559-amino-acid polypeptide reads, in one-letter code: Serine/threonine-protein kinase VRK1 (559 aa).

The Protein kinase domain occupies 32–388 (YIVGKQFATG…EDDDEEEEVI (357 aa)). ATP is bound by residues 38–46 (FATGGFGRI) and K61. The active-site Proton acceptor is D167. Disordered regions lie at residues 315–419 (EAAQ…ATSD) and 448–559 (SSCE…SSEV). Polar residues-rich tracts occupy residues 405 to 418 (RSFN…TATS) and 449 to 460 (SCESQYESNEPG). The segment covering 533-542 (TSARYQEKRA) has biased composition (basic and acidic residues). Residues 545 to 559 (NTKPTFDDSSCSSEV) are compositionally biased toward polar residues.

It belongs to the protein kinase superfamily. CK1 Ser/Thr protein kinase family. VRK subfamily. Post-translationally, autophosphorylates in vitro.

It localises to the nucleus. The protein localises to the cytoplasm. The protein resides in the cajal body. The enzyme catalyses L-seryl-[protein] + ATP = O-phospho-L-seryl-[protein] + ADP + H(+). It catalyses the reaction L-threonyl-[protein] + ATP = O-phospho-L-threonyl-[protein] + ADP + H(+). Serine/threonine kinase that phosphorylates baf-1, thus regulating the association of baf-1 with chromatin and nuclear membrane proteins during nuclear envelope formation. May act through the egl-17 signaling pathway. Essential in hermaphrodites for formation of the vulva, uterus, and uterine seam cells and for development and maintenance of the somatic gonad and thus the germ line. Acts to prevent cep-1 from triggering an inappropriate cell cycle arrest, thereby promoting germ cell proliferation. Regulates anchor cell polarity and the timing of anchor cell invasion through the basement membranes separating vulval and somatic gonadal cells during the L3 larval stage. The protein is Serine/threonine-protein kinase VRK1 of Caenorhabditis briggsae.